Consider the following 163-residue polypeptide: Ribonuclease P protein subunit p25-like protein (163 aa).

Disordered regions lie at residues 1 to 24 (MEQY…LPPD) and 126 to 163 (LDPS…DTRS). Over residues 153–163 (RPRRRARDTRS) the composition is skewed to basic residues.

The protein belongs to the histone-like Alba family.

The protein resides in the nucleus. Its function is as follows. May be a component of ribonuclease P or MRP. The sequence is that of Ribonuclease P protein subunit p25-like protein (Rpp25l) from Mus musculus (Mouse).